The chain runs to 104 residues: Large ribosomal subunit protein uL24 (104 aa).

It belongs to the universal ribosomal protein uL24 family. In terms of assembly, part of the 50S ribosomal subunit.

Its function is as follows. One of two assembly initiator proteins, it binds directly to the 5'-end of the 23S rRNA, where it nucleates assembly of the 50S subunit. In terms of biological role, one of the proteins that surrounds the polypeptide exit tunnel on the outside of the subunit. This chain is Large ribosomal subunit protein uL24, found in Rhodopseudomonas palustris (strain BisB5).